The following is a 1144-amino-acid chain: PAN2-PAN3 deadenylation complex catalytic subunit PAN2 (1144 aa).

4 WD repeats span residues 27-66 (KKEKQVTKVVFDTEANLIWAGDSYGRVSSYDPTYSLYTRH), 153-193 (SSTY…VIHS), 196-233 (GHSASITSMDFKDNTLVTAGKSKTFGYLQSDQFINVYD), and 302-341 (HPCKSISQFTLSPSGDYLAFLEEESMINMWNRSNSMSGFT). Residues 344-481 (AAVLEYQDYP…LLEYKPSNNI (138 aa)) are linker. Positions 482 to 887 (DIPPAYSKLQ…TPEIVVYSDA (406 aa)) constitute a USP domain. The region spanning 939 to 1110 (VALDAEFVSL…EDAHTALLLY (172 aa)) is the Exonuclease domain. Positions 942, 944, 1051, and 1102 each coordinate a divalent metal cation.

It belongs to the peptidase C19 family. PAN2 subfamily. In terms of assembly, forms a heterotrimer with an asymmetric homodimer of the regulatory subunit PAN3 to form the poly(A)-nuclease (PAN) deadenylation complex. It depends on a divalent metal cation as a cofactor.

It is found in the cytoplasm. The enzyme catalyses Exonucleolytic cleavage of poly(A) to 5'-AMP.. With respect to regulation, positively regulated by the regulatory subunit PAN3. In terms of biological role, catalytic subunit of the poly(A)-nuclease (PAN) deadenylation complex, one of two cytoplasmic mRNA deadenylases involved in mRNA turnover. PAN specifically shortens poly(A) tails of RNA and the activity is stimulated by poly(A)-binding protein PAB1. PAN deadenylation is followed by rapid degradation of the shortened mRNA tails by the CCR4-NOT complex. Deadenylated mRNAs are then degraded by two alternative mechanisms, namely exosome-mediated 3'-5' exonucleolytic degradation, or deadenylation-dependent mRNA decaping and subsequent 5'-3' exonucleolytic degradation by XRN1. May also be involved in post-transcriptional maturation of mRNA poly(A) tails. This is PAN2-PAN3 deadenylation complex catalytic subunit PAN2 from Kluyveromyces lactis (strain ATCC 8585 / CBS 2359 / DSM 70799 / NBRC 1267 / NRRL Y-1140 / WM37) (Yeast).